We begin with the raw amino-acid sequence, 626 residues long: MSETVERHEFGAEVGRLLDLVVHALYSDREIFLRELVANAADATDRRRFEALTNEALALPSDARVLIAPDKAARTLTISDSGIGMSKEDLAQNLGTIARSGTRAFSQALGEAKGSEGEDLRPSLIGQFGVGFYSAFMVADRVTVTSRRAGGEEAWTWASDGKGSYTLEPASREQAGTDIVLHLKEDADEYLESYRLDHVVRKWADNIAVPIAIRDAEGKEEAANRGTALWRKPKSEITEEQYKEFYRTVSHGFDEPWATLHWRAEGALEFTGLLFVPSMKPFMPVEDDRRSKVRLHVRRMFITDEAELLPNWLRFVHGVVDTDDLPLNVSREMLQSTPTLQKIRRAVTTRVINELSNRSKNTEKADDYQKFFENFGSVLKEGIYEDFERRAEIAPLLRFRSSTEGGWTSLPDYVSRMKPEQEAIYYLVADDVEALKNSAQLEGFRARGVEVLLLSDHVDAFWPEQLGKFEDKPLRSVTQGSADLAKLKPEGEAAEDAPALDRLVAALKLALEPDVSDVRVTDRLVDSAVVLAASGMGPDLQMQRLLRRAGRGFGGSAPILEINPRHALIRSLNDRAEAGEDLKAEAGTLLDLARVQDGDTPRDPVAFARAVAAALAGTVAKPAESA.

The a; substrate-binding stretch occupies residues 1–331; it reads MSETVERHEF…TDDLPLNVSR (331 aa). The b stretch occupies residues 332–544; sequence EMLQSTPTLQ…GMGPDLQMQR (213 aa). Residues 545–626 are c; that stretch reads LLRRAGRGFG…GTVAKPAESA (82 aa).

It belongs to the heat shock protein 90 family. Homodimer.

The protein resides in the cytoplasm. Its function is as follows. Molecular chaperone. Has ATPase activity. The chain is Chaperone protein HtpG from Methylorubrum populi (strain ATCC BAA-705 / NCIMB 13946 / BJ001) (Methylobacterium populi).